The following is a 1135-amino-acid chain: MVDLESEVPPLPPRYRFRDLLLGDQGWQNDDRVQVEFYMNENTFKERLKLFFIKNQRSSLRIRLFNFSLKLLSCLLYIIRVLLEKPSQGSEWSHIFWVNRSLPLWGLQVSVALISLFETILLGYLSYKGNIWEQILRIPFILEIINAVPFIISIFWPTLRNLFVPVFLNCWLAKHALENMINDLHRAIQRTQSAMFNQVLILISTLLCLIFTCICGIQHLERIGKKLNLFDSLYFCIVTFSTVGFGDVTPETWSSKLFVVAMICVALVVLPIQFEQLAYLWMERQKSGGNYSRHRAQTEKHVVLCVSSLKIDLLMDFLNEFYAHPRLQDYYVVILCPTEMDVQVRRVLQIPMWSQRVIYLQGSALKDQDLLRAKMDNAEACFILSSRCEVDRTSSDHQTILRAWAVKDFAPNCPLYVQILKPENKFHIKFADHVVCEEEFKYAMLALNCICPATSTLITLLVHTSRGQEGQQSPEQWQKTYGRCSGNEVYHIVLEESTFFAEYEGKSFTYASFHAHKKFGVCLVGVRREDNKNILLNPGPRYIMNASDICFYINITKEENSAFKNQDQQRKSNVSRSFYHGPSRLPVHSIIASMGTVAIDLQDTSCRATSGPTLALPSEGGKELRRPSIAPVLEVADTSSIQTCDLLSDQSEDETTPDEETSSNLEYAKGYPPYSPYIGSSPTFCHLLQEKVPFCCLRLDKSCQHNYYEDAKAYGFKNKLIIVAAETAGNGLYNFIVPLRAYYRPKKELNPIVLLLDNPPDMHFLDAICWFPMVYYMVGSIDNLDDLLRCGVTFAANMVVVDKESTMSAEEDYMADAKTIVNVQTLFRLFSSLSIITELTHPANMRFMQFRAKDCYSLALSKLEKKERERGSNLAFMFRLPFAAGRVFSISMLDTLLYQSFVKDYMISITRLLLGLDTIPGSGFLCSMKITEDDLWIRTYARLYQKLCSSTGDVPIGIYRTESQKLTTSESQISISVEEWEDTKDVKDPGHHRSLHRNSTSSDQSDHPLLRRKSMQWARRLSRKGPKHSGKTAEKITQQRLNLYRRSERQELAELVKNRMKHLGLSTVGYDEMNDHQSTLSYILINPSPDTRLELNDVVYLIRPDPLSYLPNSEPSRKNSICNAAVQDSREETQL.

Topologically, residues 1–63 are cytoplasmic; it reads MVDLESEVPP…KNQRSSLRIR (63 aa). The chain crosses the membrane as a helical span at residues 64 to 84; it reads LFNFSLKLLSCLLYIIRVLLE. At 85–101 the chain is on the extracellular side; it reads KPSQGSEWSHIFWVNRS. The chain crosses the membrane as a helical span at residues 102–122; sequence LPLWGLQVSVALISLFETILL. At 123–137 the chain is on the cytoplasmic side; sequence GYLSYKGNIWEQILR. A helical transmembrane segment spans residues 138–158; it reads IPFILEIINAVPFIISIFWPT. At 159–164 the chain is on the extracellular side; that stretch reads LRNLFV. Residues 165–185 form a helical membrane-spanning segment; it reads PVFLNCWLAKHALENMINDLH. Residues 186-198 lie on the Cytoplasmic side of the membrane; that stretch reads RAIQRTQSAMFNQ. A helical membrane pass occupies residues 199–219; it reads VLILISTLLCLIFTCICGIQH. The Extracellular portion of the chain corresponds to 220–228; sequence LERIGKKLN. Positions 229–249 form an intramembrane region, pore-forming; that stretch reads LFDSLYFCIVTFSTVGFGDVT. The Extracellular segment spans residues 250–256; sequence PETWSSK. The chain crosses the membrane as a helical span at residues 257-277; it reads LFVVAMICVALVVLPIQFEQL. The Cytoplasmic portion of the chain corresponds to 278 to 1135; the sequence is AYLWMERQKS…VQDSREETQL (858 aa). 2 RCK N-terminal domains span residues 299-435 and 718-858; these read EKHV…DHVV and NKLI…CYSL. Disordered stretches follow at residues 982–1036 and 1111–1135; these read DTKD…AEKI and PNSE…ETQL. Residues 1010-1030 are compositionally biased toward basic residues; it reads LRRKSMQWARRLSRKGPKHSG. Positions 1111-1122 are enriched in polar residues; the sequence is PNSEPSRKNSIC.

Belongs to the potassium channel family. Calcium-activated (TC 1.A.1.3) subfamily. KCa4.2/KCNT2 sub-subfamily. Homotetramer. Forms heteromeric channels with KCNT1. These heterodimer channels differ from the homomers in their unitary conductance, kinetic behavior, subcellular localization, and response to activation of protein kinase C. In terms of processing, phosphorylated by protein kinase C. Phosphorylation of the C-terminal domain inhibits channel activity. Within the dorsal root ganglia (DRGs), exclusively expressed in small-sized and medium-sized calcitonin gene-related peptide (CGRP)-containing DRG neurons.

It is found in the cell membrane. It catalyses the reaction K(+)(in) = K(+)(out). Its activity is regulated as follows. Are normally in a closed state unless activated by an increase in intracellular Na(+) and Cl(-). Inhibited upon stimulation of G-protein coupled receptors, such as CHRM1 and GRM1. There is conflicting data about the effect of ATP on KNCT2 channels activity. Intracellular ATP was initially report to inhibit the channel activity. However, others studies conclude that KNCT2 channels are not inhibited by intracellular ATP. Its function is as follows. Sodium-activated and chloride-activated potassium channel. Produces rapidly activating outward rectifier K(+) currents. Contributes to regulate neuronal excitability. This Mus musculus (Mouse) protein is Potassium channel subfamily T member 2 (Kcnt2).